The following is a 118-amino-acid chain: Basic phospholipase A2 PA-12C (118 aa).

Disulfide bonds link Cys-11–Cys-71, Cys-27–Cys-117, Cys-29–Cys-45, Cys-44–Cys-98, Cys-51–Cys-91, Cys-60–Cys-84, and Cys-78–Cys-89. Residues Tyr-28, Gly-30, and Gly-32 each contribute to the Ca(2+) site. The active site involves His-48. Ca(2+) is bound at residue Asp-49. Asp-92 is a catalytic residue.

It belongs to the phospholipase A2 family. Group I subfamily. D49 sub-subfamily. Requires Ca(2+) as cofactor. In terms of tissue distribution, expressed by the venom gland.

It is found in the secreted. The enzyme catalyses a 1,2-diacyl-sn-glycero-3-phosphocholine + H2O = a 1-acyl-sn-glycero-3-phosphocholine + a fatty acid + H(+). In terms of biological role, PLA2 catalyzes the calcium-dependent hydrolysis of the 2-acyl groups in 3-sn-phosphoglycerides. The sequence is that of Basic phospholipase A2 PA-12C from Pseudechis australis (Mulga snake).